A 123-amino-acid polypeptide reads, in one-letter code: Small ribosomal subunit protein uS13 (123 aa).

Residues 95–123 (GLPVRGQKTKTNARTRKGPKRAISGKKNK) are disordered.

Belongs to the universal ribosomal protein uS13 family. Part of the 30S ribosomal subunit. Forms a loose heterodimer with protein S19. Forms two bridges to the 50S subunit in the 70S ribosome.

Located at the top of the head of the 30S subunit, it contacts several helices of the 16S rRNA. In the 70S ribosome it contacts the 23S rRNA (bridge B1a) and protein L5 of the 50S subunit (bridge B1b), connecting the 2 subunits; these bridges are implicated in subunit movement. Contacts the tRNAs in the A and P-sites. The chain is Small ribosomal subunit protein uS13 from Clostridium novyi (strain NT).